The primary structure comprises 80 residues: Protein pegasus (80 aa).

The signal sequence occupies residues 1–22; that stretch reads MKLSAVLLAIALLALSLVQCLG. One can recognise a Kazal-like domain in the interval 24-80; that stretch reads PDPSTKCVMECDTQEYRSICAADDKGSTKTYRNLCVMKTENCLQNANFQKISDKECP. 3 disulfides stabilise this stretch: Cys-30-Cys-65, Cys-34-Cys-58, and Cys-43-Cys-79.

As to quaternary structure, interacts with wg; the interaction facilitates short-range diffusion of wg. Strongly expressed in the developing fly wing but is excluded from the presumptive wing margin.

The protein localises to the secreted. Increases short-range diffusion of the wingless/wg protein, enhancing its signaling and expression of target genes required for wing margin morphogenesis. May act as a serine protease inhibitor since it possess the Kazal serine protease inhibitor signature. The sequence is that of Protein pegasus from Drosophila melanogaster (Fruit fly).